The following is a 331-amino-acid chain: Glyceraldehyde-3-phosphate dehydrogenase 2 (331 aa).

NAD(+)-binding positions include 11 to 12, aspartate 33, and arginine 78; that span reads RI. Residues 148–150, threonine 179, 208–209, and arginine 231 contribute to the D-glyceraldehyde 3-phosphate site; these read SCT and TG. The Nucleophile role is filled by cysteine 149. An NAD(+)-binding site is contributed by asparagine 313.

This sequence belongs to the glyceraldehyde-3-phosphate dehydrogenase family. As to quaternary structure, homotetramer.

It is found in the cytoplasm. It carries out the reaction D-glyceraldehyde 3-phosphate + phosphate + NAD(+) = (2R)-3-phospho-glyceroyl phosphate + NADH + H(+). Its pathway is carbohydrate degradation; glycolysis; pyruvate from D-glyceraldehyde 3-phosphate: step 1/5. In Kluyveromyces marxianus (Yeast), this protein is Glyceraldehyde-3-phosphate dehydrogenase 2 (GAP2).